The following is a 193-amino-acid chain: Ion-translocating oxidoreductase complex subunit A (193 aa).

6 consecutive transmembrane segments (helical) span residues 5 to 25, 39 to 59, 62 to 82, 102 to 122, 134 to 154, and 171 to 191; these read LLLFVGTVLVNNFVLVKFLGL, IGMGFATTFVMTIASISSWLM, FILVPLDLLYLRTLSFILVIA, LLGIFLPLITTNCAVLGVALL, AVYGFGAAVGFSLVMVLFAAI, and SIGLITAGLMSLAFMGFSGLV.

Belongs to the NqrDE/RnfAE family. The complex is composed of six subunits: RnfA, RnfB, RnfC, RnfD, RnfE and RnfG.

The protein resides in the cell inner membrane. Part of a membrane-bound complex that couples electron transfer with translocation of ions across the membrane. This Proteus mirabilis (strain HI4320) protein is Ion-translocating oxidoreductase complex subunit A.